A 692-amino-acid polypeptide reads, in one-letter code: Elongation factor G (692 aa).

A tr-type G domain is found at 8-282 (EKTRNIGIMA…AVVEYMPAPT (275 aa)). GTP is bound by residues 17–24 (AHIDAGKT), 81–85 (DTPGH), and 135–138 (NKMD). The disordered stretch occupies residues 285–304 (PNIKGVHPETGEADERHSSD). A compositionally biased stretch (basic and acidic residues) spans 290–304 (VHPETGEADERHSSD).

This sequence belongs to the TRAFAC class translation factor GTPase superfamily. Classic translation factor GTPase family. EF-G/EF-2 subfamily.

It is found in the cytoplasm. Catalyzes the GTP-dependent ribosomal translocation step during translation elongation. During this step, the ribosome changes from the pre-translocational (PRE) to the post-translocational (POST) state as the newly formed A-site-bound peptidyl-tRNA and P-site-bound deacylated tRNA move to the P and E sites, respectively. Catalyzes the coordinated movement of the two tRNA molecules, the mRNA and conformational changes in the ribosome. This is Elongation factor G from Desulfitobacterium hafniense (strain DSM 10664 / DCB-2).